A 118-amino-acid chain; its full sequence is Putative pterin-4-alpha-carbinolamine dehydratase (118 aa).

The protein belongs to the pterin-4-alpha-carbinolamine dehydratase family.

The catalysed reaction is (4aS,6R)-4a-hydroxy-L-erythro-5,6,7,8-tetrahydrobiopterin = (6R)-L-erythro-6,7-dihydrobiopterin + H2O. The chain is Putative pterin-4-alpha-carbinolamine dehydratase from Azotobacter vinelandii (strain DJ / ATCC BAA-1303).